The sequence spans 22 residues: Cysteine-rich venom protein notescatin (22 aa).

The segment covering 1-15 (SNKKDYQKEIVDKHN) has biased composition (basic and acidic residues). Positions 1–22 (SNKKDYQKEIVDKHNALRRSVK) are disordered.

The protein belongs to the CRISP family. In terms of processing, contains 8 disulfide bonds. As to expression, expressed by the venom gland.

Its subcellular location is the secreted. This Notechis scutatus scutatus (Mainland tiger snake) protein is Cysteine-rich venom protein notescatin.